Consider the following 874-residue polypeptide: Alanine--tRNA ligase (874 aa).

Zn(2+) contacts are provided by His-562, His-566, Cys-664, and His-668.

It belongs to the class-II aminoacyl-tRNA synthetase family. The cofactor is Zn(2+).

It is found in the cytoplasm. The catalysed reaction is tRNA(Ala) + L-alanine + ATP = L-alanyl-tRNA(Ala) + AMP + diphosphate. Catalyzes the attachment of alanine to tRNA(Ala) in a two-step reaction: alanine is first activated by ATP to form Ala-AMP and then transferred to the acceptor end of tRNA(Ala). Also edits incorrectly charged Ser-tRNA(Ala) and Gly-tRNA(Ala) via its editing domain. The protein is Alanine--tRNA ligase of Shewanella loihica (strain ATCC BAA-1088 / PV-4).